Reading from the N-terminus, the 23-residue chain is Phallacidin proprotein 1 (23 aa).

Pro1 is a propeptide. Positions 2–8 form a cross-link, cyclopeptide (Ala-Pro); sequence AWLVDCP. The segment at residues 3–7 is a cross-link (2'-cysteinyl-6'-hydroxytryptophan sulfoxide (Trp-Cys)); sequence WLVDC. A propeptide spanning residues 9-23 is cleaved from the precursor; sequence CVGDDVNRLLTRGER.

It belongs to the MSDIN fungal toxin family. Processed by the macrocyclase-peptidase enzyme POPB to yield a toxic cyclic heptapeptide. POPB first removes 10 residues from the N-terminus. Conformational trapping of the remaining peptide forces the enzyme to release this intermediate rather than proceed to macrocyclization. The enzyme rebinds the remaining peptide in a different conformation and catalyzes macrocyclization of the N-terminal 7 residues.

Functionally, toxin that belongs to the bicyclic heptapeptides called phallotoxins. Although structurally related to amatoxins, phallotoxins have a different mode of action, which is the stabilization of F-actin. Phallotoxins are poisonous when administered parenterally, but not orally because of poor absorption. In Amanita exitialis (Guangzhou destroying angel), this protein is Phallacidin proprotein 1.